A 4621-amino-acid chain; its full sequence is Dynein axonemal heavy chain 5 (4621 aa).

Residues Met-1 to Ile-1938 are stem. Coiled-coil stretches lie at residues Trp-260 to Lys-305 and Leu-803 to Glu-825. Positions Val-901 to Glu-921 are disordered. Coiled-coil stretches lie at residues Ala-1065–Leu-1094 and Asp-1433–Ala-1462. 4 AAA regions span residues Tyr-1939–Thr-2161, Thr-2221–Leu-2440, Val-2547–Gly-2800, and Leu-2913–Ser-3167. Residues Gly-1977–Thr-1984 and Gly-2259–Thr-2266 contribute to the ATP site. The segment at Tyr-3182–Cys-3479 is stalk. 3 coiled-coil regions span residues Tyr-3186–Lys-3299, Leu-3423–Ile-3490, and Ile-3729–Arg-3814. AAA regions lie at residues Leu-3564–Gln-3794 and Ala-4009–Asn-4223. A coiled-coil region spans residues Phe-4389–Gly-4417.

The protein belongs to the dynein heavy chain family. Interacts with DNAL1. Consists of at least two heavy chains and a number of intermediate and light chains. As to expression, strongly expressed in lung and kidney and weaker expression seen in brain, heart and testis. In the brain, expressed in ependymal cells lining the brain ventricles and the aqueduct.

It is found in the cytoplasm. It localises to the cytoskeleton. Its subcellular location is the cilium axoneme. In terms of biological role, force generating protein of respiratory cilia. Produces force towards the minus ends of microtubules. Dynein has ATPase activity; the force-producing power stroke is thought to occur on release of ADP. Required for structural and functional integrity of the cilia of ependymal cells lining the brain ventricles. The chain is Dynein axonemal heavy chain 5 from Mus musculus (Mouse).